The primary structure comprises 200 residues: Cytochrome c biogenesis ATP-binding export protein CcmA (200 aa).

The region spanning 1–200 (MRLSGNGLRC…ARELRIGGAA (200 aa)) is the ABC transporter domain. ATP is bound at residue 35-42 (GPNGAGKT).

The protein belongs to the ABC transporter superfamily. CcmA exporter (TC 3.A.1.107) family. The complex is composed of two ATP-binding proteins (CcmA) and two transmembrane proteins (CcmB).

It localises to the cell inner membrane. The catalysed reaction is heme b(in) + ATP + H2O = heme b(out) + ADP + phosphate + H(+). In terms of biological role, part of the ABC transporter complex CcmAB involved in the biogenesis of c-type cytochromes; once thought to export heme, this seems not to be the case, but its exact role is uncertain. Responsible for energy coupling to the transport system. The sequence is that of Cytochrome c biogenesis ATP-binding export protein CcmA from Nitrobacter winogradskyi (strain ATCC 25391 / DSM 10237 / CIP 104748 / NCIMB 11846 / Nb-255).